The chain runs to 404 residues: Putative nitronate monooxygenase (404 aa).

41–43 (PMA) lines the FMN pocket. The active-site Proton acceptor is the H224. H224 lines the substrate pocket. Residues 270–272 (AGG) and 293–294 (GT) each bind FMN.

The protein belongs to the nitronate monooxygenase family. NMO class I subfamily. FMN is required as a cofactor.

The protein localises to the cytoplasm. The enzyme catalyses ethylnitronate + O2 = chemical entity + acetaldehyde + nitrite + H(+). Functionally, catalyzes the oxidation of alkyl nitronates to produce the corresponding carbonyl compounds and nitrites. This Saccharomyces cerevisiae (strain ATCC 204508 / S288c) (Baker's yeast) protein is Putative nitronate monooxygenase.